We begin with the raw amino-acid sequence, 380 residues long: Chaperone protein DnaJ (380 aa).

One can recognise a J domain in the interval 5-70; sequence DYYEVLGVSK…QKRQTYDQYG (66 aa). The segment at 136 to 214 adopts a CR-type zinc-finger fold; sequence GKEVEIKIPT…CHGQGRVEKT (79 aa). Positions 149, 152, 166, 169, 188, 191, 202, and 205 each coordinate Zn(2+). CXXCXGXG motif repeat units lie at residues 149–156, 166–173, 188–195, and 202–209; these read CDPCDGSG, CTTCHGAG, CPTCQGQG, and CDSCHGQG.

It belongs to the DnaJ family. Homodimer. The cofactor is Zn(2+).

The protein localises to the cytoplasm. Its function is as follows. Participates actively in the response to hyperosmotic and heat shock by preventing the aggregation of stress-denatured proteins and by disaggregating proteins, also in an autonomous, DnaK-independent fashion. Unfolded proteins bind initially to DnaJ; upon interaction with the DnaJ-bound protein, DnaK hydrolyzes its bound ATP, resulting in the formation of a stable complex. GrpE releases ADP from DnaK; ATP binding to DnaK triggers the release of the substrate protein, thus completing the reaction cycle. Several rounds of ATP-dependent interactions between DnaJ, DnaK and GrpE are required for fully efficient folding. Also involved, together with DnaK and GrpE, in the DNA replication of plasmids through activation of initiation proteins. The polypeptide is Chaperone protein DnaJ (Pseudoalteromonas translucida (strain TAC 125)).